The sequence spans 229 residues: Cytidylate kinase (229 aa).

12 to 20 (GPSGSGKGT) is a binding site for ATP.

Belongs to the cytidylate kinase family. Type 1 subfamily.

The protein resides in the cytoplasm. It catalyses the reaction CMP + ATP = CDP + ADP. It carries out the reaction dCMP + ATP = dCDP + ADP. The protein is Cytidylate kinase of Pseudomonas syringae pv. tomato (strain ATCC BAA-871 / DC3000).